A 275-amino-acid polypeptide reads, in one-letter code: Apoptosis inhibitor 1 (275 aa).

2 BIR repeats span residues 24–91 (LIER…CVYA) and 126–193 (PSAR…CYFV). Positions 163, 166, 183, and 190 each coordinate Zn(2+). An RING-type zinc finger spans residues 227–263 (CKVCLERQRDAVLLPCRHFCVCMQCYFALDGKCPTCR).

Functionally, acts by blocking cellular apoptosis rather than by preventing viral stimulation of apoptosis. The polypeptide is Apoptosis inhibitor 1 (IAP1) (Orgyia pseudotsugata (Douglas-fir tussock moth)).